We begin with the raw amino-acid sequence, 625 residues long: Low affinity potassium transport system protein Kup (625 aa).

12 helical membrane-spanning segments follow: residues 15-35, 58-78, 103-123, 140-160, 171-191, 218-238, 251-271, 282-302, 340-360, 366-386, 396-416, and 422-442; these read TIFSTINVLHGLIAISPIYII, IIFWTLFFIIFLKYLILIVSI, FVIVILGLISMCLFFGDIIII, LSFEKFIFIISIAIFTFLFFI, IFSFLISIWFILVGLIGLKGI, FFVFGTLILLISISEILYINI, LFFVFPMIMINCFGQGSIILL, FLVPDWARFFTFTFAIIISII, IYIPCINWIFYLSAVIQISIF, LILIYGIGSIITMSLTTFFSL, FKILKITFLLTILILEFFIFI, and IICGGWFPIVFGIIFFTIMIT.

The protein belongs to the HAK/KUP transporter (TC 2.A.72) family.

Its subcellular location is the cell membrane. The catalysed reaction is K(+)(in) + H(+)(in) = K(+)(out) + H(+)(out). In terms of biological role, responsible for the low-affinity transport of potassium into the cell. Likely operates as a K(+):H(+) symporter. The chain is Low affinity potassium transport system protein Kup from Wigglesworthia glossinidia brevipalpis.